The sequence spans 103 residues: Large ribosomal subunit protein bL21 (103 aa).

It belongs to the bacterial ribosomal protein bL21 family. Part of the 50S ribosomal subunit. Contacts protein L20.

Its function is as follows. This protein binds to 23S rRNA in the presence of protein L20. The chain is Large ribosomal subunit protein bL21 from Maridesulfovibrio salexigens (strain ATCC 14822 / DSM 2638 / NCIMB 8403 / VKM B-1763) (Desulfovibrio salexigens).